A 461-amino-acid chain; its full sequence is Photosystem II CP43 reaction center protein (461 aa).

Residues 1–2 (ME) constitute a propeptide that is removed on maturation. At Thr3 the chain carries N-acetylthreonine. Thr3 bears the Phosphothreonine mark. The next 5 helical transmembrane spans lie at 57 to 81 (LFEV…PHLA), 122 to 143 (LIGP…KDKS), 166 to 188 (KSVY…RKIT), 243 to 263 (KPFA…LSYS), and 279 to 300 (WFNN…ASQA). [CaMn4O5] cluster is bound at residue Glu355. The chain crosses the membrane as a helical span at residues 435 to 459 (RARAAAAGFEKGIDRDTEPVLSMTP).

This sequence belongs to the PsbB/PsbC family. PsbC subfamily. In terms of assembly, PSII is composed of 1 copy each of membrane proteins PsbA, PsbB, PsbC, PsbD, PsbE, PsbF, PsbH, PsbI, PsbJ, PsbK, PsbL, PsbM, PsbT, PsbX, PsbY, PsbZ, Psb30/Ycf12, at least 3 peripheral proteins of the oxygen-evolving complex and a large number of cofactors. It forms dimeric complexes. Requires Binds multiple chlorophylls and provides some of the ligands for the Ca-4Mn-5O cluster of the oxygen-evolving complex. It may also provide a ligand for a Cl- that is required for oxygen evolution. PSII binds additional chlorophylls, carotenoids and specific lipids. as cofactor.

The protein resides in the plastid. The protein localises to the chloroplast thylakoid membrane. Its function is as follows. One of the components of the core complex of photosystem II (PSII). It binds chlorophyll and helps catalyze the primary light-induced photochemical processes of PSII. PSII is a light-driven water:plastoquinone oxidoreductase, using light energy to abstract electrons from H(2)O, generating O(2) and a proton gradient subsequently used for ATP formation. The protein is Photosystem II CP43 reaction center protein of Psilotum nudum (Whisk fern).